The primary structure comprises 120 residues: Small ribosomal subunit protein uS13 (120 aa).

The segment at 93 to 120 (RKGLPVRGQTTKNNARTRKGKKKTVGSK) is disordered. The segment covering 107-120 (ARTRKGKKKTVGSK) has biased composition (basic residues).

Belongs to the universal ribosomal protein uS13 family. In terms of assembly, part of the 30S ribosomal subunit. Forms a loose heterodimer with protein S19. Forms two bridges to the 50S subunit in the 70S ribosome.

Its function is as follows. Located at the top of the head of the 30S subunit, it contacts several helices of the 16S rRNA. In the 70S ribosome it contacts the 23S rRNA (bridge B1a) and protein L5 of the 50S subunit (bridge B1b), connecting the 2 subunits; these bridges are implicated in subunit movement. Contacts the tRNAs in the A and P-sites. The sequence is that of Small ribosomal subunit protein uS13 from Helicobacter pylori (strain P12).